A 155-amino-acid polypeptide reads, in one-letter code: MSRRGTAEEKTAKSDPIYRNRLVNMLVNRILKHGKKSLAYQIIYRAMKKIQQKTETNPLSVLRQAIRGVTPDIAVKARRVGGSTHQVPIEIGSTQGKALAIRWLLGASRKRPGRNMAFKLSSELVDAAKGSGDAIRKKEETHRMAEANXAFAHFR.

The protein belongs to the universal ribosomal protein uS7 family. As to quaternary structure, part of the 30S ribosomal subunit.

It is found in the plastid. Its subcellular location is the chloroplast. One of the primary rRNA binding proteins, it binds directly to 16S rRNA where it nucleates assembly of the head domain of the 30S subunit. The chain is Small ribosomal subunit protein uS7c (rps7) from Gunnera chilensis (Chilean rhubarb).